The sequence spans 512 residues: Secreted triacylglycerol lipase LIP5 (512 aa).

The first 17 residues, 1–17, serve as a signal peptide directing secretion; the sequence is MMYASLVHWLALAVALA. Cysteine 118 and cysteine 292 are joined by a disulfide. Serine 203 acts as the Nucleophile in catalysis. Asparagine 316 carries an N-linked (GlcNAc...) asparagine glycan. Aspartate 352 is an active-site residue. An N-linked (GlcNAc...) asparagine glycan is attached at asparagine 361. Histidine 386 is a catalytic residue. Residue asparagine 453 is glycosylated (N-linked (GlcNAc...) asparagine). The interval 480–512 is disordered; that stretch reads KGDISPGEGGDHTKESKKAAAKFKAEKKHGKHH. Residues 488-497 are compositionally biased toward basic and acidic residues; sequence GGDHTKESKK. Over residues 498-512 the composition is skewed to basic residues; that stretch reads AAAKFKAEKKHGKHH.

The protein belongs to the AB hydrolase superfamily. Lipase family. Class Lip subfamily.

It is found in the secreted. It carries out the reaction a triacylglycerol + H2O = a diacylglycerol + a fatty acid + H(+). The catalysed reaction is a monoacylglycerol + H2O = glycerol + a fatty acid + H(+). It catalyses the reaction a diacylglycerol + H2O = a monoacylglycerol + a fatty acid + H(+). Functionally, secreted lipase that hydrolyzes acylglycerol lipids such as triacylglycerols and consequently releases free fatty acid. Can hydrolyze 4-nitrophenyl palmitate to release 4-nitrophenol and palmitoic acid. Due to an absence of fatty acid synthase genes in Malassezia species, secretory lipases are essential for the yeast to generate free fatty acids from degradation of sebum and assimilate them as lipid sources for growth. Plays an essential role at the pathogen-host interface during disease progression. This chain is Secreted triacylglycerol lipase LIP5, found in Malassezia restricta (strain ATCC 96810 / NBRC 103918 / CBS 7877) (Seborrheic dermatitis infection agent).